A 282-amino-acid polypeptide reads, in one-letter code: Uracil-DNA glycosylase (282 aa).

Residues 15–40 are disordered; the sequence is SAASKRKSASNTENIPEKVPAGNENQ. Residue D123 is the Proton acceptor of the active site.

Belongs to the uracil-DNA glycosylase (UDG) superfamily. UNG family.

The protein resides in the mitochondrion. Its subcellular location is the nucleus. It catalyses the reaction Hydrolyzes single-stranded DNA or mismatched double-stranded DNA and polynucleotides, releasing free uracil.. Inhibited by UGI, a B.subtilis bacteriophage PBS2 peptide inhibitor. Functionally, excises uracil residues from the DNA which can arise as a result of misincorporation of dUMP residues by DNA polymerase or due to deamination of cytosine. This chain is Uracil-DNA glycosylase, found in Caenorhabditis elegans.